A 101-amino-acid chain; its full sequence is NADH-quinone oxidoreductase subunit K (101 aa).

3 helical membrane-spanning segments follow: residues 5-25, 30-50, and 62-82; these read PNWYLALSAVLFTIGTFGVLF, IVVLMSVELMLNAVNLTLVTF, and LVFFSIAVAAAEAAVGLAIVI.

Belongs to the complex I subunit 4L family. As to quaternary structure, NDH-1 is composed of 14 different subunits. Subunits NuoA, H, J, K, L, M, N constitute the membrane sector of the complex.

It is found in the cell inner membrane. It catalyses the reaction a quinone + NADH + 5 H(+)(in) = a quinol + NAD(+) + 4 H(+)(out). NDH-1 shuttles electrons from NADH, via FMN and iron-sulfur (Fe-S) centers, to quinones in the respiratory chain. The immediate electron acceptor for the enzyme in this species is believed to be a menaquinone. Couples the redox reaction to proton translocation (for every two electrons transferred, four hydrogen ions are translocated across the cytoplasmic membrane), and thus conserves the redox energy in a proton gradient. The polypeptide is NADH-quinone oxidoreductase subunit K (Salinibacter ruber (strain DSM 13855 / M31)).